The primary structure comprises 209 residues: Uracil phosphoribosyltransferase (209 aa).

Residues Arg-78, Arg-103, and 130–138 each bind 5-phospho-alpha-D-ribose 1-diphosphate; that span reads DPMFATGGT. Uracil contacts are provided by residues Ile-193 and 198–200; that span reads GDA. Asp-199 contacts 5-phospho-alpha-D-ribose 1-diphosphate.

This sequence belongs to the UPRTase family. Mg(2+) serves as cofactor.

It catalyses the reaction UMP + diphosphate = 5-phospho-alpha-D-ribose 1-diphosphate + uracil. The protein operates within pyrimidine metabolism; UMP biosynthesis via salvage pathway; UMP from uracil: step 1/1. Allosterically activated by GTP. Functionally, catalyzes the conversion of uracil and 5-phospho-alpha-D-ribose 1-diphosphate (PRPP) to UMP and diphosphate. This Campylobacter fetus subsp. fetus (strain 82-40) protein is Uracil phosphoribosyltransferase.